A 133-amino-acid polypeptide reads, in one-letter code: Ribosome-binding factor A (133 aa).

It belongs to the RbfA family. As to quaternary structure, monomer. Binds 30S ribosomal subunits, but not 50S ribosomal subunits or 70S ribosomes.

The protein resides in the cytoplasm. In terms of biological role, one of several proteins that assist in the late maturation steps of the functional core of the 30S ribosomal subunit. Associates with free 30S ribosomal subunits (but not with 30S subunits that are part of 70S ribosomes or polysomes). Required for efficient processing of 16S rRNA. May interact with the 5'-terminal helix region of 16S rRNA. In Psychromonas ingrahamii (strain DSM 17664 / CCUG 51855 / 37), this protein is Ribosome-binding factor A.